Reading from the N-terminus, the 125-residue chain is Small ribosomal subunit protein bS6 (125 aa).

The interval 94 to 125 (KAETGASSMMKTVEREEARKASQAEFAASNER) is disordered. A compositionally biased stretch (basic and acidic residues) spans 105–115 (TVEREEARKAS).

It belongs to the bacterial ribosomal protein bS6 family.

In terms of biological role, binds together with bS18 to 16S ribosomal RNA. In Acidovorax ebreus (strain TPSY) (Diaphorobacter sp. (strain TPSY)), this protein is Small ribosomal subunit protein bS6.